Reading from the N-terminus, the 447-residue chain is Cysteine--tRNA ligase (447 aa).

Zn(2+) is bound at residue Cys28. Positions 30–40 match the 'HIGH' region motif; it reads PTVYNYIHVGN. Residues Cys211, His236, and Glu240 each coordinate Zn(2+). Positions 268 to 272 match the 'KMSKS' region motif; the sequence is KMSKS. Lys271 lines the ATP pocket.

It belongs to the class-I aminoacyl-tRNA synthetase family. In terms of assembly, monomer. It depends on Zn(2+) as a cofactor.

It is found in the cytoplasm. It carries out the reaction tRNA(Cys) + L-cysteine + ATP = L-cysteinyl-tRNA(Cys) + AMP + diphosphate. The sequence is that of Cysteine--tRNA ligase from Streptococcus pneumoniae (strain ATCC BAA-255 / R6).